Here is a 248-residue protein sequence, read N- to C-terminus: 3-deoxy-manno-octulosonate cytidylyltransferase (248 aa).

The protein belongs to the KdsB family.

It is found in the cytoplasm. The enzyme catalyses 3-deoxy-alpha-D-manno-oct-2-ulosonate + CTP = CMP-3-deoxy-beta-D-manno-octulosonate + diphosphate. It participates in nucleotide-sugar biosynthesis; CMP-3-deoxy-D-manno-octulosonate biosynthesis; CMP-3-deoxy-D-manno-octulosonate from 3-deoxy-D-manno-octulosonate and CTP: step 1/1. Its pathway is bacterial outer membrane biogenesis; lipopolysaccharide biosynthesis. Activates KDO (a required 8-carbon sugar) for incorporation into bacterial lipopolysaccharide in Gram-negative bacteria. The sequence is that of 3-deoxy-manno-octulosonate cytidylyltransferase from Desulfosudis oleivorans (strain DSM 6200 / JCM 39069 / Hxd3) (Desulfococcus oleovorans).